The chain runs to 477 residues: Ubiquitin carboxyl-terminal hydrolase 7 (477 aa).

A Ubiquitin-like domain is found at 2-77; the sequence is LTVSVKWQKK…LMMMGTADEI (76 aa). The USP domain maps to 104–473; sequence AGLVNLGNTC…MAYIVMYKAR (370 aa). Cysteine 113 serves as the catalytic Nucleophile. A calmodulin-binding region spans residues 171–190; the sequence is MPFWMVLQKKYPQFAQLHNG. Positions 364–401 are disordered; sequence QASAKSSSKGDDVKMTDAEGSSNQSGESSTGDQQEGAS. Residues 371–380 are compositionally biased toward basic and acidic residues; the sequence is SKGDDVKMTD. Residues 382–399 show a composition bias toward polar residues; the sequence is EGSSNQSGESSTGDQQEG. Catalysis depends on histidine 425, which acts as the Proton acceptor.

This sequence belongs to the peptidase C19 family. In terms of assembly, interacts with calmodulin (CaM).

The catalysed reaction is Thiol-dependent hydrolysis of ester, thioester, amide, peptide and isopeptide bonds formed by the C-terminal Gly of ubiquitin (a 76-residue protein attached to proteins as an intracellular targeting signal).. Functionally, recognizes and hydrolyzes the peptide bond at the C-terminal Gly of ubiquitin. Involved in the processing of poly-ubiquitin precursors as well as that of ubiquitinated proteins. The chain is Ubiquitin carboxyl-terminal hydrolase 7 (UBP7) from Arabidopsis thaliana (Mouse-ear cress).